Reading from the N-terminus, the 160-residue chain is SsrA-binding protein (160 aa).

The disordered stretch occupies residues 136–160 (KRDTVRERDSNRELQRAVRNKGKED).

Belongs to the SmpB family.

It localises to the cytoplasm. Required for rescue of stalled ribosomes mediated by trans-translation. Binds to transfer-messenger RNA (tmRNA), required for stable association of tmRNA with ribosomes. tmRNA and SmpB together mimic tRNA shape, replacing the anticodon stem-loop with SmpB. tmRNA is encoded by the ssrA gene; the 2 termini fold to resemble tRNA(Ala) and it encodes a 'tag peptide', a short internal open reading frame. During trans-translation Ala-aminoacylated tmRNA acts like a tRNA, entering the A-site of stalled ribosomes, displacing the stalled mRNA. The ribosome then switches to translate the ORF on the tmRNA; the nascent peptide is terminated with the 'tag peptide' encoded by the tmRNA and targeted for degradation. The ribosome is freed to recommence translation, which seems to be the essential function of trans-translation. In Pseudomonas putida (strain W619), this protein is SsrA-binding protein.